The sequence spans 179 residues: Signal peptidase complex subunit 2 (179 aa).

The Cytoplasmic segment spans residues 1–48; sequence MSGNNVQEEDSTFHVSNLYSETEIKKITQDFISEKIREQNFEEIVKYS. A helical transmembrane segment spans residues 49 to 69; that stretch reads NIRIFLSLVLIVIGTYCSIFV. The Extracellular segment spans residues 70–74; sequence QYKKN. The helical transmembrane segment at 75–95 threads the bilayer; sequence PVIMIQLLVAFFVVSTTLIIF. Residues 96 to 179 lie on the Cytoplasmic side of the membrane; it reads EYFFFDDVFM…AHGRTLKLKN (84 aa).

The protein belongs to the SPCS2 family. In terms of assembly, component of the signal peptidase complex (SPC) composed of a catalytic subunit SEC11/SPC21 and three accessory subunits SPC25, SPC3/SPC22, SPC1/SPC12. The complex induces a local thinning of the ER membrane which is used to measure the length of the signal peptide (SP) h-region of protein substrates. This ensures the selectivity of the complex towards h-regions shorter than 18-20 amino acids. Within the complex, interacts with SEC11/SPC21. Component of a complex composed of SPC25 and PMV; the interaction is mediated via the transmembrane domains. The complex interacts with the SEC61 channel-forming translocon complex and is involved in the recognition and import of PEXEL motif-containing proteins into the ER for subsequent export.

The protein resides in the endoplasmic reticulum membrane. Its function is as follows. Component of the signal peptidase complex (SPC) which catalyzes the cleavage of N-terminal signal sequences from nascent proteins as they are translocated into the lumen of the endoplasmic reticulum. Enhances the enzymatic activity of SPC and facilitates the interactions between different components of the translocation site. Also, regulatory component of the CSP25-plasmepsin PMV complex which cleaves the pentameric localization motif RxLxE/Q/D (termed Plasmodium export element (PEXEL)) located downstream of the N-terminal secretory signal sequence of several proteins. In Plasmodium falciparum (isolate 3D7), this protein is Signal peptidase complex subunit 2.